Reading from the N-terminus, the 194-residue chain is Orotate phosphoribosyltransferase (194 aa).

Residue 116–124 (EDIVTTGLS) participates in 5-phospho-alpha-D-ribose 1-diphosphate binding. Orotate-binding residues include Thr-120 and Arg-148.

This sequence belongs to the purine/pyrimidine phosphoribosyltransferase family. PyrE subfamily. In terms of assembly, homodimer. The cofactor is Mg(2+).

It catalyses the reaction orotidine 5'-phosphate + diphosphate = orotate + 5-phospho-alpha-D-ribose 1-diphosphate. Its pathway is pyrimidine metabolism; UMP biosynthesis via de novo pathway; UMP from orotate: step 1/2. Functionally, catalyzes the transfer of a ribosyl phosphate group from 5-phosphoribose 1-diphosphate to orotate, leading to the formation of orotidine monophosphate (OMP). The sequence is that of Orotate phosphoribosyltransferase from Caulobacter vibrioides (strain ATCC 19089 / CIP 103742 / CB 15) (Caulobacter crescentus).